The chain runs to 193 residues: Thioredoxin peroxidase (193 aa).

Residues Ala-3–Phe-161 form the Thioredoxin domain. Cys-48 functions as the Cysteine sulfenic acid (-SOH) intermediate in the catalytic mechanism.

Belongs to the peroxiredoxin family. AhpC/Prx1 subfamily. Homodimer; disulfide-linked, upon oxidation.

The catalysed reaction is a hydroperoxide + [thioredoxin]-dithiol = an alcohol + [thioredoxin]-disulfide + H2O. Thiol-specific peroxidase that catalyzes the reduction of hydrogen peroxide and organic hydroperoxides to water and alcohols, respectively. Plays a role in cell protection against oxidative stress by detoxifying peroxides and as sensor of hydrogen peroxide-mediated signaling events. The protein is Thioredoxin peroxidase (TPX) of Echinococcus granulosus (Hydatid tapeworm).